Reading from the N-terminus, the 235-residue chain is Phosphoribosylaminoimidazole-succinocarboxamide synthase (235 aa).

This sequence belongs to the SAICAR synthetase family.

It catalyses the reaction 5-amino-1-(5-phospho-D-ribosyl)imidazole-4-carboxylate + L-aspartate + ATP = (2S)-2-[5-amino-1-(5-phospho-beta-D-ribosyl)imidazole-4-carboxamido]succinate + ADP + phosphate + 2 H(+). It participates in purine metabolism; IMP biosynthesis via de novo pathway; 5-amino-1-(5-phospho-D-ribosyl)imidazole-4-carboxamide from 5-amino-1-(5-phospho-D-ribosyl)imidazole-4-carboxylate: step 1/2. This chain is Phosphoribosylaminoimidazole-succinocarboxamide synthase, found in Clostridium perfringens (strain 13 / Type A).